Consider the following 244-residue polypeptide: Small ribosomal subunit protein uS2 (244 aa).

The protein belongs to the universal ribosomal protein uS2 family.

The protein is Small ribosomal subunit protein uS2 of Halalkalibacterium halodurans (strain ATCC BAA-125 / DSM 18197 / FERM 7344 / JCM 9153 / C-125) (Bacillus halodurans).